Here is a 374-residue protein sequence, read N- to C-terminus: F-box/LRR-repeat protein 8 (374 aa).

An F-box domain is found at 2-48 (AEPGEGLPEEVLALIFRHLSLRDRAAAARVCRAWAAAATCSAVWHDT).

Directly interacts with SKP1 and CUL1.

Its function is as follows. Substrate-recognition component of the SCF (SKP1-CUL1-F-box protein)-type E3 ubiquitin ligase complex. The protein is F-box/LRR-repeat protein 8 (FBXL8) of Homo sapiens (Human).